A 349-amino-acid polypeptide reads, in one-letter code: Cyclic amide hydrolase (349 aa).

Residues 1–90 (MTSPEDTAGV…AVFVDDPASS (90 aa)) are RU A. Substrate is bound at residue R38. Residues 99-231 (GLSIGVTTTA…AAVLVMGNSP (133 aa)) are RU B. K149 is a catalytic residue. Substrate-binding positions include R176, 214–215 (SA), K311, and 330–331 (SG). S214 serves as the catalytic Nucleophile. The interval 237-349 (YRIGHGVLRD…GGGTVAVIAR (113 aa)) is RU C.

The protein belongs to the cyclic amide hydrolase (CyAH) family. As to quaternary structure, homotetramer.

Functionally, cyclic amide hydrolase of unknown substrate specificity. Catalyzes the hydrolytic ring-opening of a cyclic amide. Does not act on cyanuric acid nor barbituric acid. The sequence is that of Cyclic amide hydrolase from Rhodococcus sp.